A 140-amino-acid polypeptide reads, in one-letter code: Prepilin peptidase-dependent protein A (140 aa).

A propeptide spanning residues 1-23 (MLLLKASAICGKGNEGKRNKKGG) is cleaved from the precursor. F24 carries the N-methylphenylalanine modification. A helical transmembrane segment spans residues 24 to 44 (FTLIELTVVLAIMAIILMVIA).

Its subcellular location is the membrane. Not yet known. The chain is Prepilin peptidase-dependent protein A (ppdA) from Clostridium perfringens (strain 13 / Type A).